A 266-amino-acid polypeptide reads, in one-letter code: Large ribosomal subunit protein eL8 (266 aa).

Positions 1–11 are enriched in basic residues; the sequence is MPKGKKAKGKK. Residues 1-21 are disordered; the sequence is MPKGKKAKGKKVAPAPSVAKK.

This sequence belongs to the eukaryotic ribosomal protein eL8 family. Component of the large ribosomal subunit.

The protein localises to the cytoplasm. Functionally, component of the large ribosomal subunit. The ribosome is a large ribonucleoprotein complex responsible for the synthesis of proteins in the cell. The polypeptide is Large ribosomal subunit protein eL8 (rpl7a) (Ictalurus punctatus (Channel catfish)).